Consider the following 209-residue polypeptide: MKKSTLLFSLMAMALSGCNSVLNAPIEVKKLVYQIEHTDPAWQQHLKQLAEIKNYEVKGQFGYISPTERFSAHFDWQYKTPIDFTLALSSNLSTKLLKLQRSHQGLTVSDSEGYSRTEADIHALMQEIIGVSFPIDQFAYWVKGQPAQEGNYIVNEKRQLSQFSYPINQQIWQARYVEYHENRVPYLPKLIVLENGQQTLKIRLDHWNY.

Residues 1 to 17 form the signal peptide; the sequence is MKKSTLLFSLMAMALSG. Cys-18 carries N-palmitoyl cysteine lipidation. The S-diacylglycerol cysteine moiety is linked to residue Cys-18.

The protein belongs to the LolB family. Monomer.

It is found in the cell outer membrane. Plays a critical role in the incorporation of lipoproteins in the outer membrane after they are released by the LolA protein. This Haemophilus ducreyi (strain 35000HP / ATCC 700724) protein is Outer-membrane lipoprotein LolB.